Here is a 362-residue protein sequence, read N- to C-terminus: Large ribosomal subunit protein uL4A (362 aa).

Ser2 carries the N-acetylserine modification. An Omega-N-methylarginine modification is found at Arg95. Positions 277–362 are C-terminal-extended nuclear localization signal; it reads PSHIISTSDV…AVFTETLKHD (86 aa).

It belongs to the universal ribosomal protein uL4 family. As to quaternary structure, component of the large ribosomal subunit (LSU). Mature yeast ribosomes consist of a small (40S) and a large (60S) subunit. The 40S small subunit contains 1 molecule of ribosomal RNA (18S rRNA) and 33 different proteins (encoded by 57 genes). The large 60S subunit contains 3 rRNA molecules (25S, 5.8S and 5S rRNA) and 46 different proteins (encoded by 81 genes). uL4 is associated with the polypeptide exit tunnel. uL4 interacts with its chaperone ACL4 and the nuclear import receptor KAP104. Post-translationally, N-terminally acetylated by acetyltransferase NatA.

The protein resides in the cytoplasm. It is found in the nucleus. In terms of biological role, component of the ribosome, a large ribonucleoprotein complex responsible for the synthesis of proteins in the cell. The small ribosomal subunit (SSU) binds messenger RNAs (mRNAs) and translates the encoded message by selecting cognate aminoacyl-transfer RNA (tRNA) molecules. The large subunit (LSU) contains the ribosomal catalytic site termed the peptidyl transferase center (PTC), which catalyzes the formation of peptide bonds, thereby polymerizing the amino acids delivered by tRNAs into a polypeptide chain. The nascent polypeptides leave the ribosome through a tunnel in the LSU and interact with protein factors that function in enzymatic processing, targeting, and the membrane insertion of nascent chains at the exit of the ribosomal tunnel. uL4 participates in the regulation of the accumulation of its own mRNA. This is Large ribosomal subunit protein uL4A from Saccharomyces cerevisiae (strain ATCC 204508 / S288c) (Baker's yeast).